The chain runs to 194 residues: DPY30 domain-containing protein 2 (194 aa).

A disordered region spans residues 126 to 172 (EAFEKEPLKQESLPGTSDMIPGMPQQSPSSEPSVSSQVDLNTGTPQE). Residues 149-163 (PQQSPSSEPSVSSQV) show a composition bias toward low complexity.

This sequence belongs to the dpy-30 family.

The chain is DPY30 domain-containing protein 2 (DYDC2) from Bos taurus (Bovine).